The following is a 466-amino-acid chain: SVGFKAGVKEYKLTYYTPDYETQDTDILAAFRVTPQPGVPPEEAGAAVAAESSTGTWTTVWTDGLTSLDRYKGRCYHIEPVAGEDNQYIVYVAYPLDLFEEGSVTNMFTSIVGNVFGFKALRALRLEDLRVPPAYSKTFQGPPHGIQVERDKLNKYGRPLLGCTIKPKLGLSAKNYGRAVYECLRGGLDFTKDDENVNSQPFMRWRDRFLFCAEAIYKAQAETGEIKGHYLNATAGTCEEMTKRADFAYELGVPIIMHDYLTGGFTANTSLALYCRNHGLLLHIHRAMHAVIDRQKNHGIHFRVLAKALRLSGGDHIHAGTVVGKLEGERDITLGFVVLLRDDYLEKDRSRGIYFTQFWVSLPGVLPVASGGIHVWHMPALTEIFGDDSVLQFGGGTLGHPWGNAPGAVANRVALEACVQARNEGRDLAREGNEIIRKASKWSPELSAACEVWKEIKLYFEAVDTL.

Lys5 carries the N6,N6,N6-trimethyllysine modification. Asn114 and Thr164 together coordinate substrate. The Proton acceptor role is filled by Lys166. Substrate is bound at residue Lys168. 3 residues coordinate Mg(2+): Lys192, Asp194, and Glu195. N6-carboxylysine is present on Lys192. His285 (proton acceptor) is an active-site residue. Substrate-binding residues include Arg286, His318, and Ser370.

Belongs to the RuBisCO large chain family. Type I subfamily. In terms of assembly, heterohexadecamer of 8 large chains and 8 small chains; disulfide-linked. The disulfide link is formed within the large subunit homodimers. Mg(2+) serves as cofactor. Post-translationally, the disulfide bond which can form in the large chain dimeric partners within the hexadecamer appears to be associated with oxidative stress and protein turnover.

The protein localises to the plastid. The protein resides in the chloroplast. It carries out the reaction 2 (2R)-3-phosphoglycerate + 2 H(+) = D-ribulose 1,5-bisphosphate + CO2 + H2O. The catalysed reaction is D-ribulose 1,5-bisphosphate + O2 = 2-phosphoglycolate + (2R)-3-phosphoglycerate + 2 H(+). In terms of biological role, ruBisCO catalyzes two reactions: the carboxylation of D-ribulose 1,5-bisphosphate, the primary event in carbon dioxide fixation, as well as the oxidative fragmentation of the pentose substrate in the photorespiration process. Both reactions occur simultaneously and in competition at the same active site. The protein is Ribulose bisphosphate carboxylase large chain of Drosera binata (Fork-leaved sundew).